The sequence spans 3925 residues: Polyketide synthase ThaH (3925 aa).

Residues Met-1 to Ala-56 form a disordered region. Basic residues predominate over residues Gln-17–Arg-49. A Carrier 1 domain is found at Gly-1073 to Glu-1148. An O-(pantetheine 4'-phosphoryl)serine modification is found at Ser-1108. The span at Ala-1166–Ala-1182 shows a compositional bias: low complexity. The segment at Ala-1166 to Gly-1233 is disordered. The span at Gln-1183–Asp-1196 shows a compositional bias: basic and acidic residues. Residues Pro-1202–Arg-1216 are compositionally biased toward low complexity. Positions Ala-1237–Ala-1667 constitute a Ketosynthase family 3 (KS3) 1 domain. Active-site for beta-ketoacyl synthase 1 activity residues include Cys-1413, His-1549, and His-1589. A disordered region spans residues Gly-1679–Ala-1698. Residues His-1844 to Ala-1969 form an N-terminal hotdog fold region. In terms of domain architecture, PKS/mFAS DH spans His-1844–Arg-2143. The Proton acceptor; for dehydratase activity role is filled by His-1873. A C-terminal hotdog fold region spans residues Ala-1983 to Arg-2143. The active-site Proton donor; for dehydratase activity is Asp-2043. Low complexity-rich tracts occupy residues Asp-2594–Ser-2607 and Pro-2632–Ala-2646. 2 disordered regions span residues Asp-2594–Met-2613 and Ala-2619–Ala-2657. One can recognise a Carrier 2 domain in the interval Glu-2664–His-2737. At Ser-2698 the chain carries O-(pantetheine 4'-phosphoryl)serine. Residues Leu-2753–Ala-2768 are compositionally biased toward low complexity. The interval Leu-2753–Pro-2841 is disordered. Residues Pro-2770 to Glu-2779 are compositionally biased toward basic and acidic residues. Low complexity-rich tracts occupy residues Gly-2789–Ala-2813 and Glu-2823–Pro-2841. Residues Ala-2847–Glu-3286 enclose the Ketosynthase family 3 (KS3) 2 domain. Catalysis depends on for beta-ketoacyl synthase 2 activity residues Cys-3022, His-3157, and His-3197. 2 stretches are compositionally biased toward low complexity: residues Ala-3512–Ala-3524 and Ala-3578–Ser-3592. Disordered regions lie at residues Ala-3512–Glu-3531 and Ala-3578–Asp-3619. The span at Pro-3593–Pro-3603 shows a compositional bias: pro residues. The span at Pro-3604–Asp-3619 shows a compositional bias: low complexity. In terms of domain architecture, Carrier 3 spans Ala-3622–Ala-3699. The residue at position 3659 (Ser-3659) is an O-(pantetheine 4'-phosphoryl)serine. Residues Pro-3734 to Gly-3754 are disordered. Residues Thr-3762 to Leu-3839 form the Carrier 4 domain. An O-(pantetheine 4'-phosphoryl)serine modification is found at Ser-3799.

This sequence belongs to the ATP-dependent AMP-binding enzyme family. Requires pantetheine 4'-phosphate as cofactor.

It localises to the cytoplasm. It participates in antibiotic biosynthesis. In terms of biological role, involved in production of the polyketide antibiotic thailandamide. In Burkholderia thailandensis (strain ATCC 700388 / DSM 13276 / CCUG 48851 / CIP 106301 / E264), this protein is Polyketide synthase ThaH.